The sequence spans 197 residues: Peptide deformylase (197 aa).

C106 and H148 together coordinate Fe cation. The active site involves E149. H152 provides a ligand contact to Fe cation.

It belongs to the polypeptide deformylase family. Fe(2+) is required as a cofactor.

It carries out the reaction N-terminal N-formyl-L-methionyl-[peptide] + H2O = N-terminal L-methionyl-[peptide] + formate. In terms of biological role, removes the formyl group from the N-terminal Met of newly synthesized proteins. Requires at least a dipeptide for an efficient rate of reaction. N-terminal L-methionine is a prerequisite for activity but the enzyme has broad specificity at other positions. The chain is Peptide deformylase from Mycobacterium ulcerans (strain Agy99).